The sequence spans 443 residues: C4-dicarboxylate transport protein (443 aa).

A run of 9 helical transmembrane segments spans residues Ser10–Pro30, Leu46–Met66, Tyr78–Val98, Ile143–Gly163, Pro199–Val219, Leu224–Cys244, Val291–Leu311, Ile332–Gly352, and Ile354–Ile374.

Belongs to the dicarboxylate/amino acid:cation symporter (DAACS) (TC 2.A.23) family.

Its subcellular location is the cell inner membrane. Functionally, responsible for the transport of dicarboxylates such as succinate, fumarate, and malate from the periplasm across the membrane. The polypeptide is C4-dicarboxylate transport protein (Pseudomonas fluorescens (strain SBW25)).